Reading from the N-terminus, the 648-residue chain is MVVVTKKTMKIQIHLLYSFLFLCFSTLTLSSEPRNPEVEALISIRNNLHDPHGALNNWDEFSVDPCSWAMITCSPDNLVIGLGAPSQSLSGGLSESIGNLTNLRQVSLQNNNISGKIPPELGFLPKLQTLDLSNNRFSGDIPVSIDQLSSLQYLRLNNNSLSGPFPASLSQIPHLSFLDLSYNNLSGPVPKFPARTFNVAGNPLICRSNPPEICSGSINASPLSVSLSSSSGRRSNRLAIALSVSLGSVVILVLALGSFCWYRKKQRRLLILNLNDKQEEGLQGLGNLRSFTFRELHVYTDGFSSKNILGAGGFGNVYRGKLGDGTMVAVKRLKDINGTSGDSQFRMELEMISLAVHKNLLRLIGYCATSGERLLVYPYMPNGSVASKLKSKPALDWNMRKRIAIGAARGLLYLHEQCDPKIIHRDVKAANILLDECFEAVVGDFGLAKLLNHADSHVTTAVRGTVGHIAPEYLSTGQSSEKTDVFGFGILLLELITGLRALEFGKTVSQKGAMLEWVRKLHEEMKVEELLDRELGTNYDKIEVGEMLQVALLCTQYLPAHRPKMSEVVLMLEGDGLAERWAASHNHSHFYHANISFKTISSLSTTSVSRLDAHCNDPTYQMFGSSAFDDDDDHQPLDSFAMELSGPR.

The N-terminal stretch at 1 to 30 (MVVVTKKTMKIQIHLLYSFLFLCFSTLTLS) is a signal peptide. The Extracellular portion of the chain corresponds to 31 to 238 (SEPRNPEVEA…SSSGRRSNRL (208 aa)). N-linked (GlcNAc...) asparagine glycans are attached at residues asparagine 99 and asparagine 112. 4 LRR repeats span residues 100–125 (LTNL…GFLP), 127–148 (LQTL…IDQL), 149–172 (SSLQ…LSQI), and 174–199 (HLSF…TFNV). N-linked (GlcNAc...) asparagine glycosylation is found at asparagine 158 and asparagine 184. Residues 239–259 (AIALSVSLGSVVILVLALGSF) traverse the membrane as a helical segment. Topologically, residues 260-648 (CWYRKKQRRL…SFAMELSGPR (389 aa)) are cytoplasmic. Threonine 300 bears the Phosphothreonine mark. In terms of domain architecture, Protein kinase spans 303–582 (FSSKNILGAG…EGDGLAERWA (280 aa)). Residue 309–317 (LGAGGFGNV) participates in ATP binding. Threonine 326 is subject to Phosphothreonine. Lysine 331 serves as a coordination point for ATP. Residues serine 384 and serine 387 each carry the phosphoserine modification. Aspartate 426 acts as the Proton acceptor in catalysis. 3 positions are modified to phosphothreonine: threonine 459, threonine 460, and threonine 465. Tyrosine 473 carries the phosphotyrosine modification. Serine 475 carries the post-translational modification Phosphoserine. Threonine 476 is modified (phosphothreonine). Position 480 is a phosphoserine (serine 480). Threonine 555 carries the phosphothreonine modification.

This sequence belongs to the protein kinase superfamily. Ser/Thr protein kinase family.

It localises to the cell membrane. It carries out the reaction L-seryl-[protein] + ATP = O-phospho-L-seryl-[protein] + ADP + H(+). The catalysed reaction is L-threonyl-[protein] + ATP = O-phospho-L-threonyl-[protein] + ADP + H(+). The protein is Probable LRR receptor-like serine/threonine-protein kinase At4g30520 of Arabidopsis thaliana (Mouse-ear cress).